Consider the following 340-residue polypeptide: GTP 3',8-cyclase (340 aa).

The Radical SAM core domain occupies lysine 8–aspartate 227. Arginine 17 contributes to the GTP binding site. Residues cysteine 24 and cysteine 28 each coordinate [4Fe-4S] cluster. Tyrosine 30 provides a ligand contact to S-adenosyl-L-methionine. Cysteine 31 provides a ligand contact to [4Fe-4S] cluster. Arginine 71 is a GTP binding site. S-adenosyl-L-methionine is bound at residue glycine 75. Residue threonine 102 coordinates GTP. Serine 126 is a binding site for S-adenosyl-L-methionine. Lysine 163 provides a ligand contact to GTP. Residue methionine 197 participates in S-adenosyl-L-methionine binding. [4Fe-4S] cluster is bound by residues cysteine 261 and cysteine 264. Arginine 266–arginine 268 is a binding site for GTP. A [4Fe-4S] cluster-binding site is contributed by cysteine 278.

It belongs to the radical SAM superfamily. MoaA family. As to quaternary structure, monomer and homodimer. [4Fe-4S] cluster serves as cofactor.

The enzyme catalyses GTP + AH2 + S-adenosyl-L-methionine = (8S)-3',8-cyclo-7,8-dihydroguanosine 5'-triphosphate + 5'-deoxyadenosine + L-methionine + A + H(+). The protein operates within cofactor biosynthesis; molybdopterin biosynthesis. Its function is as follows. Catalyzes the cyclization of GTP to (8S)-3',8-cyclo-7,8-dihydroguanosine 5'-triphosphate. The sequence is that of GTP 3',8-cyclase from Staphylococcus aureus (strain Mu3 / ATCC 700698).